A 457-amino-acid chain; its full sequence is C4-dicarboxylate transport protein (457 aa).

Transmembrane regions (helical) follow at residues 22–42, 55–75, 90–110, 138–158, 168–188, 209–229, 242–262, 335–357, and 376–396; these read FQVV…PAFA, LVKM…IAGM, VYFL…AHVV, LTLV…AFTG, GPNI…LALV, LVHI…AFTI, WLVG…LGVV, LFIA…LAVA, and AATL…ILGV.

The protein belongs to the dicarboxylate/amino acid:cation symporter (DAACS) (TC 2.A.23) family.

It localises to the cell inner membrane. Functionally, responsible for the transport of dicarboxylates such as succinate, fumarate, and malate from the periplasm across the membrane. In Xanthomonas oryzae pv. oryzae (strain MAFF 311018), this protein is C4-dicarboxylate transport protein.